The sequence spans 157 residues: 2-C-methyl-D-erythritol 2,4-cyclodiphosphate synthase (157 aa).

Residues Asp-9 and His-11 each contribute to the a divalent metal cation site. 4-CDP-2-C-methyl-D-erythritol 2-phosphate-binding positions include 9-11 (DVH) and 35-36 (HS). His-43 is an a divalent metal cation binding site. Residues 57–59 (DIG), 62–66 (FPETD), 133–136 (TTME), Phe-140, and Lys-143 each bind 4-CDP-2-C-methyl-D-erythritol 2-phosphate.

This sequence belongs to the IspF family. As to quaternary structure, homotrimer. A divalent metal cation serves as cofactor.

It carries out the reaction 4-CDP-2-C-methyl-D-erythritol 2-phosphate = 2-C-methyl-D-erythritol 2,4-cyclic diphosphate + CMP. It participates in isoprenoid biosynthesis; isopentenyl diphosphate biosynthesis via DXP pathway; isopentenyl diphosphate from 1-deoxy-D-xylulose 5-phosphate: step 4/6. In terms of biological role, involved in the biosynthesis of isopentenyl diphosphate (IPP) and dimethylallyl diphosphate (DMAPP), two major building blocks of isoprenoid compounds. Catalyzes the conversion of 4-diphosphocytidyl-2-C-methyl-D-erythritol 2-phosphate (CDP-ME2P) to 2-C-methyl-D-erythritol 2,4-cyclodiphosphate (ME-CPP) with a corresponding release of cytidine 5-monophosphate (CMP). This Enterococcus faecalis (strain ATCC 700802 / V583) protein is 2-C-methyl-D-erythritol 2,4-cyclodiphosphate synthase.